A 207-amino-acid polypeptide reads, in one-letter code: Glutathione S-transferase P (207 aa).

Residues 1-78 (PPYTITYFPV…HLGRSFGLYG (78 aa)) form the GST N-terminal domain. Tyr3 carries the post-translational modification Phosphotyrosine; by EGFR. Glutathione-binding positions include Tyr7, Arg13, Trp38, Lys42, and 49–50 (QL). Thr59 is modified (phosphothreonine). 62–63 (QS) provides a ligand contact to glutathione. The region spanning 80–201 (DQKEAALVDM…ASPEHVNRPI (122 aa)) is the GST C-terminal domain. N6-succinyllysine occurs at positions 100 and 113. Lys125 carries the N6-acetyllysine modification.

Belongs to the GST superfamily. Pi family. Homodimer. Interacts with CDK5.

Its subcellular location is the cytoplasm. The protein localises to the mitochondrion. The protein resides in the nucleus. It carries out the reaction RX + glutathione = an S-substituted glutathione + a halide anion + H(+). The enzyme catalyses prostaglandin J2 + glutathione = prostaglandin J2-S-(R)-glutathione. The catalysed reaction is prostaglandin J2 + glutathione = prostaglandin J2-S-(S)-glutathione. It catalyses the reaction prostaglandin A2 + glutathione = prostaglandin A2-S-(S)-glutathione. It carries out the reaction 11(S)-hydroxy-14(S),15(S)-epoxy-(5Z,8Z,12E)-eicosatrienoate + glutathione = (11S,15S)-dihydroxy-14(R)-S-glutathionyl-(5Z,8Z,12E)-eicosatrienoate. Its function is as follows. Conjugation of reduced glutathione to a wide number of exogenous and endogenous hydrophobic electrophiles. Involved in the formation of glutathione conjugates of both prostaglandin A2 (PGA2) and prostaglandin J2 (PGJ2). Participates in the formation of novel hepoxilin regioisomers. Negatively regulates CDK5 activity via p25/p35 translocation to prevent neurodegeneration. This is Glutathione S-transferase P (GSTP1) from Sus scrofa (Pig).